A 221-amino-acid chain; its full sequence is MIHKHETRELVAIEELVMSWIEAFKSLSYFGIFLALSIEFIPAEVVLPLAGYWVSKGDMTLAGVVLAGSLGGVAGPLTLYWIGRYGGRPFLERFGKYLFIKPEALDKSDNFFKKHGGFVAFSGRFLPGIRTLISIPCGIAKMNVWVFSLYTFIAMLPITFVYVYLGVKLGENWKAVGSILDQYMLPIGIAILALFLLYLLMKKRKKRTHSEQLSVFLKNKR.

A run of 4 helical transmembrane segments spans residues 30–50 (FGIF…LPLA), 62–82 (AGVV…LYWI), 144–164 (VWVF…VYVY), and 179–199 (ILDQ…LLYL).

This sequence belongs to the DedA family.

Its subcellular location is the cell membrane. This is an uncharacterized protein from Bacillus subtilis (strain 168).